A 30-amino-acid chain; its full sequence is Cyclotide cter-P (30 aa).

The segment at residues 1 to 30 (GIPCGESCVFIPCITAAIGCSCKSKVCYRN) is a cross-link (cyclopeptide (Gly-Asn)). 3 disulfides stabilise this stretch: Cys4-Cys20, Cys8-Cys22, and Cys13-Cys27.

This is a cyclic peptide.

The protein resides in the secreted. Probably participates in a plant defense mechanism. The polypeptide is Cyclotide cter-P (Clitoria ternatea (Butterfly pea)).